A 519-amino-acid chain; its full sequence is Probable cytosol aminopeptidase (519 aa).

Mn(2+)-binding residues include K283 and D288. The active site involves K295. Mn(2+) contacts are provided by D306, D365, and E367. Residue R369 is part of the active site.

It belongs to the peptidase M17 family. Requires Mn(2+) as cofactor.

It localises to the cytoplasm. The enzyme catalyses Release of an N-terminal amino acid, Xaa-|-Yaa-, in which Xaa is preferably Leu, but may be other amino acids including Pro although not Arg or Lys, and Yaa may be Pro. Amino acid amides and methyl esters are also readily hydrolyzed, but rates on arylamides are exceedingly low.. It carries out the reaction Release of an N-terminal amino acid, preferentially leucine, but not glutamic or aspartic acids.. In terms of biological role, presumably involved in the processing and regular turnover of intracellular proteins. Catalyzes the removal of unsubstituted N-terminal amino acids from various peptides. In Mycobacterium ulcerans (strain Agy99), this protein is Probable cytosol aminopeptidase.